A 1583-amino-acid polypeptide reads, in one-letter code: Protein mesh (1583 aa).

A signal peptide spans 1–21; it reads MGVKIKLVLAVVLILSANVLG. Topologically, residues 22–1182 are extracellular; sequence QDEIVNDTES…EFSQRALFLT (1161 aa). The 156-residue stretch at 260–415 folds into the NIDO domain; sequence GIYFRLDRDL…GRHIFRIDEN (156 aa). An AMOP domain is found at 647 to 798; sequence GQRWSNSMCN…VGCETFRFER (152 aa). The region spanning 811 to 1019 is the VWFD domain; that stretch reads GVAGIFGDPH…HWQLTDREQR (209 aa). One can recognise a Sushi domain in the interval 1110-1170; it reads ISCGILETPR…PDYGYTECLR (61 aa). 2 cysteine pairs are disulfide-bonded: C1112-C1152 and C1138-C1168. The chain crosses the membrane as a helical span at residues 1183 to 1203; it reads WGVIVAVILPLGLLICLLWFW. The Cytoplasmic portion of the chain corresponds to 1204–1472; the sequence is CWHKPRSEGK…QEYSSRTLGA (269 aa). Residues 1232–1250 are compositionally biased toward polar residues; that stretch reads LRSSSMGNITDTMKSSTIP. The segment at 1232–1448 is disordered; that stretch reads LRSSSMGNIT…IPEAPKSAPV (217 aa). Over residues 1291 to 1300 the composition is skewed to basic and acidic residues; sequence GKSDSGKSDK. Over residues 1405–1416 the composition is skewed to polar residues; the sequence is PIPSQYSPTYSE. Residues 1473-1493 traverse the membrane as a helical segment; sequence TWGIISAVMLPIIIILICVAW. Topologically, residues 1494–1583 are extracellular; sequence RILQRRKAEE…RQWGGETEIN (90 aa). Basic and acidic residues predominate over residues 1521-1539; it reads DSVKVTSDDESIPYKKDVT. Residues 1521 to 1583 form a disordered region; sequence DSVKVTSDDE…RQWGGETEIN (63 aa).

As to expression, in fifth instar larvae, expressed in midgut epithelial cells (at protein level).

The protein resides in the membrane. It localises to the cell junction. It is found in the septate junction. Its subcellular location is the lateral cell membrane. Its function is as follows. May be required for the proper organization of smooth septate junctions and for the barrier function of the midgut epithelium. This is Protein mesh from Bombyx mori (Silk moth).